The following is a 250-amino-acid chain: Phosphoribosylaminoimidazole-succinocarboxamide synthase (250 aa).

It belongs to the SAICAR synthetase family.

It carries out the reaction 5-amino-1-(5-phospho-D-ribosyl)imidazole-4-carboxylate + L-aspartate + ATP = (2S)-2-[5-amino-1-(5-phospho-beta-D-ribosyl)imidazole-4-carboxamido]succinate + ADP + phosphate + 2 H(+). It functions in the pathway purine metabolism; IMP biosynthesis via de novo pathway; 5-amino-1-(5-phospho-D-ribosyl)imidazole-4-carboxamide from 5-amino-1-(5-phospho-D-ribosyl)imidazole-4-carboxylate: step 1/2. This Chloroflexus aggregans (strain MD-66 / DSM 9485) protein is Phosphoribosylaminoimidazole-succinocarboxamide synthase.